The primary structure comprises 1336 residues: Cytokinesis protein sepH (1336 aa).

A compositionally biased stretch (low complexity) spans 1-10 (MVSRSSETSE). Positions 1-46 (MVSRSSETSEGPPPPSKIPGTPAKTRLSRLNSSPAKQDKPKDDRVV) are disordered. The span at 36–46 (KQDKPKDDRVV) shows a compositional bias: basic and acidic residues. Positions 59–309 (YQLGDCLGKG…ARKLLKHPWI (251 aa)) constitute a Protein kinase domain. ATP contacts are provided by residues 65–73 (LGKGAFGSV) and lysine 88. Aspartate 181 serves as the catalytic Proton acceptor. The tract at residues 368-402 (SRYTPTKDILPSPVSKHVTDRFRSPDSTEEDNWDD) is disordered. Residues 384 to 393 (HVTDRFRSPD) are compositionally biased toward basic and acidic residues. The stretch at 654-682 (AQLEEGLDEVDLEANIARDKYARLRGQVE) forms a coiled coil. A compositionally biased stretch (basic and acidic residues) spans 1194-1205 (ERSESFSLEKRK). The interval 1194 to 1336 (ERSESFSLEK…PTHADSDWAS (143 aa)) is disordered. A compositionally biased stretch (polar residues) spans 1213–1236 (TSTTPPGYLANQSAPATPQINRFN). Low complexity-rich tracts occupy residues 1253 to 1264 (PSLSSSALALRP) and 1272 to 1285 (PSLSAGLSSSAGPS). Basic residues predominate over residues 1315–1327 (SRRRSILPQRRRP).

This sequence belongs to the protein kinase superfamily. Ser/Thr protein kinase family. CDC7 subfamily. Mg(2+) serves as cofactor.

It catalyses the reaction L-seryl-[protein] + ATP = O-phospho-L-seryl-[protein] + ADP + H(+). The enzyme catalyses L-threonyl-[protein] + ATP = O-phospho-L-threonyl-[protein] + ADP + H(+). Functionally, required for early events during cytokinesis including localization of cytoskeletal components to the cytokinetic ring. In Aspergillus niger (strain ATCC MYA-4892 / CBS 513.88 / FGSC A1513), this protein is Cytokinesis protein sepH.